We begin with the raw amino-acid sequence, 197 residues long: Probable GTP-binding protein EngB (197 aa).

In terms of domain architecture, EngB-type G spans 22–195; it reads GFPEIGLAGR…WQWIEAHTVG (174 aa). GTP is bound by residues 30 to 37, 57 to 61, 75 to 78, 142 to 145, and 174 to 176; these read GRSNVGKS, GKTQT, DVPG, TKSD, and FSA. Serine 37 and threonine 59 together coordinate Mg(2+).

Belongs to the TRAFAC class TrmE-Era-EngA-EngB-Septin-like GTPase superfamily. EngB GTPase family. Mg(2+) serves as cofactor.

Necessary for normal cell division and for the maintenance of normal septation. In Lactiplantibacillus plantarum (strain ATCC BAA-793 / NCIMB 8826 / WCFS1) (Lactobacillus plantarum), this protein is Probable GTP-binding protein EngB.